Reading from the N-terminus, the 243-residue chain is UPF0758 protein Tery_2667 (243 aa).

The region spanning 113–235 is the MPN domain; it reads VVESPQAAAD…HSSLRQITNL (123 aa). Zn(2+) contacts are provided by histidine 184, histidine 186, and aspartate 197. A JAMM motif motif is present at residues 184–197; that stretch reads HNHPSGNVEPSPED.

Belongs to the UPF0758 family.

The polypeptide is UPF0758 protein Tery_2667 (Trichodesmium erythraeum (strain IMS101)).